The primary structure comprises 358 residues: RNA demethylase ALKBH5 (358 aa).

The tract at residues 1 to 50 (MSATYTDLREKLQSLYRDSPKEVRKRKQPTSDTEEEEAASEPEEEEEARK) is disordered. Over residues 7–22 (DLREKLQSLYRDSPKE) the composition is skewed to basic and acidic residues. Positions 32–46 (DTEEEEAASEPEEEE) are enriched in acidic residues. The active site involves Tyr-105. Residues Asn-159, Tyr-161, His-170, His-232, and Arg-243 each contribute to the 2-oxoglutarate site. Cys-196 and Cys-233 are disulfide-bonded. Disordered regions lie at residues 259 to 312 (EMKS…RRSV) and 334 to 358 (DYVD…MRRH). The span at 262-278 (SLSSSYQPERLQGSNRQ) shows a compositional bias: polar residues. The segment covering 279–288 (HILKPKRSHR) has biased composition (basic residues). The span at 289-310 (KADPDAAHRPRILEMDKEENRR) shows a compositional bias: basic and acidic residues.

This sequence belongs to the alkB family. As to quaternary structure, monomer. It depends on Fe(2+) as a cofactor.

The protein resides in the nucleus speckle. The catalysed reaction is an N(6)-methyladenosine in mRNA + 2-oxoglutarate + O2 = an adenosine in mRNA + formaldehyde + succinate + CO2. Its function is as follows. Dioxygenase that specifically demethylates N(6)-methyladenosine (m6A) RNA, the most prevalent internal modification of messenger RNA (mRNA) in higher eukaryotes. Demethylates RNA by oxidative demethylation, which requires molecular oxygen, alpha-ketoglutarate and iron. Demethylation of m6A mRNA affects mRNA processing, translation and export. The chain is RNA demethylase ALKBH5 (alkbh5) from Xenopus tropicalis (Western clawed frog).